A 505-amino-acid polypeptide reads, in one-letter code: MEKVLVVNFGGQYAHLIARRIREVGVYAEIASPEEAVIKASKEEVKAVILSGGPSSVYEPGAPDIDEGIFALSKPVLGICYGHQMIAKKLGGKVERGKGEYGKTIVKILVNDPLFDGWKPEEAVWMSHSDFVEEPPPGFHVLAISENGYIAAMRKGLIYGVQFHPEVHHTSKGRVMFENFLRKIARISDVWRPEDQITRIVEEIRSRVKGGDVIVGVSGGVDSTVTAVLLYKAVGQRVKAVFIDHGLFREGEPEEAASLLKSIGIDVVYIDAKERFLKRLEGVADCEEKRRIIGETFAEVFSDAVKQMPNVKYLAQGTLYPDVVESGAVKGADKIKSHHNVGGLPPWFQLELIEPLREFYKDEVRRIAKALGLPEDVVYRHPFPGPGLAVRIIGPFTREKLAIVRKATKIVEEELRKAGLFRKVWQAFATVGEDKWVGVKGDRRAMGYIVTVRIVESEDAMTADWSRIPFEILEKISSRITSEIPEVTMVTYAVTSKPPSTIEPC.

The 188-residue stretch at 3-190 (KVLVVNFGGQ…LRKIARISDV (188 aa)) folds into the Glutamine amidotransferase type-1 domain. Catalysis depends on C80, which acts as the Nucleophile. Active-site residues include H164 and E166. The region spanning 191–380 (WRPEDQITRI…LGLPEDVVYR (190 aa)) is the GMPS ATP-PPase domain. 218–224 (SGGVDST) is a binding site for ATP.

It carries out the reaction XMP + L-glutamine + ATP + H2O = GMP + L-glutamate + AMP + diphosphate + 2 H(+). It participates in purine metabolism; GMP biosynthesis; GMP from XMP (L-Gln route): step 1/1. Its function is as follows. Catalyzes the synthesis of GMP from XMP. This chain is GMP synthase [glutamine-hydrolyzing], found in Pyrobaculum aerophilum (strain ATCC 51768 / DSM 7523 / JCM 9630 / CIP 104966 / NBRC 100827 / IM2).